We begin with the raw amino-acid sequence, 658 residues long: NADH-ubiquinone oxidoreductase chain 5 (658 aa).

The next 17 helical transmembrane spans lie at 4 to 23, 30 to 52, 81 to 103, 112 to 129, 133 to 155, 168 to 190, 200 to 222, 243 to 262, 272 to 294, 301 to 319, 329 to 351, 364 to 386, 409 to 431, 452 to 471, 505 to 527, 607 to 629, and 639 to 656; these read TLIV…GRKI, IITC…EVGI, LTVS…SISY, RFFS…ILVT, YLLM…NFWF, LLTN…WSFG, LAPY…GATA, VSAL…LLMR, TVLI…IGLF, VIAY…GIGL, LVNH…HSVA, PFLP…VPFM, IVYF…VLYL, LFLN…FGFL, VPVL…SILY, LSTG…YIST, and LLIL…NKLL.

It belongs to the complex I subunit 5 family.

Its subcellular location is the mitochondrion inner membrane. It catalyses the reaction a ubiquinone + NADH + 5 H(+)(in) = a ubiquinol + NAD(+) + 4 H(+)(out). Its function is as follows. Core subunit of the mitochondrial membrane respiratory chain NADH dehydrogenase (Complex I) that is believed to belong to the minimal assembly required for catalysis. Complex I functions in the transfer of electrons from NADH to the respiratory chain. The immediate electron acceptor for the enzyme is believed to be ubiquinone. This chain is NADH-ubiquinone oxidoreductase chain 5 (nad5), found in Talaromyces marneffei (Penicillium marneffei).